Reading from the N-terminus, the 308-residue chain is tRNA pseudouridine synthase B (308 aa).

The active-site Nucleophile is aspartate 46.

The protein belongs to the pseudouridine synthase TruB family. Type 1 subfamily.

It catalyses the reaction uridine(55) in tRNA = pseudouridine(55) in tRNA. Its function is as follows. Responsible for synthesis of pseudouridine from uracil-55 in the psi GC loop of transfer RNAs. This is tRNA pseudouridine synthase B from Marinomonas sp. (strain MWYL1).